A 186-amino-acid polypeptide reads, in one-letter code: MAETSSLISGVAQRYAGSLFEHALDANSVASVEKDLGRFEALLSGSEDLRRLISSPVFSSEDQLHAIGAIADKAGIKGLVGNFLRVVAQNRRLFALPGIIAAFRQIAAEHRGEISADVVSAHELTSAQQNELKATLKGVAGKDVTINVTVDPSILGGLIVKMGSRQIDTSLRTKLSSLKLALKEVG.

This sequence belongs to the ATPase delta chain family. In terms of assembly, F-type ATPases have 2 components, F(1) - the catalytic core - and F(0) - the membrane proton channel. F(1) has five subunits: alpha(3), beta(3), gamma(1), delta(1), epsilon(1). F(0) has three main subunits: a(1), b(2) and c(10-14). The alpha and beta chains form an alternating ring which encloses part of the gamma chain. F(1) is attached to F(0) by a central stalk formed by the gamma and epsilon chains, while a peripheral stalk is formed by the delta and b chains.

It localises to the cell inner membrane. Functionally, f(1)F(0) ATP synthase produces ATP from ADP in the presence of a proton or sodium gradient. F-type ATPases consist of two structural domains, F(1) containing the extramembraneous catalytic core and F(0) containing the membrane proton channel, linked together by a central stalk and a peripheral stalk. During catalysis, ATP synthesis in the catalytic domain of F(1) is coupled via a rotary mechanism of the central stalk subunits to proton translocation. Its function is as follows. This protein is part of the stalk that links CF(0) to CF(1). It either transmits conformational changes from CF(0) to CF(1) or is implicated in proton conduction. In Brucella abortus (strain S19), this protein is ATP synthase subunit delta.